A 292-amino-acid chain; its full sequence is 4-hydroxy-tetrahydrodipicolinate synthase (292 aa).

Residue Thr45 participates in pyruvate binding. Catalysis depends on Tyr133, which acts as the Proton donor/acceptor. The active-site Schiff-base intermediate with substrate is the Lys161. Residue Ile203 coordinates pyruvate.

The protein belongs to the DapA family. In terms of assembly, homotetramer; dimer of dimers.

It localises to the cytoplasm. The enzyme catalyses L-aspartate 4-semialdehyde + pyruvate = (2S,4S)-4-hydroxy-2,3,4,5-tetrahydrodipicolinate + H2O + H(+). Its pathway is amino-acid biosynthesis; L-lysine biosynthesis via DAP pathway; (S)-tetrahydrodipicolinate from L-aspartate: step 3/4. Functionally, catalyzes the condensation of (S)-aspartate-beta-semialdehyde [(S)-ASA] and pyruvate to 4-hydroxy-tetrahydrodipicolinate (HTPA). This chain is 4-hydroxy-tetrahydrodipicolinate synthase, found in Escherichia fergusonii (strain ATCC 35469 / DSM 13698 / CCUG 18766 / IAM 14443 / JCM 21226 / LMG 7866 / NBRC 102419 / NCTC 12128 / CDC 0568-73).